The primary structure comprises 89 residues: Defensin-like protein 147 (89 aa).

A signal peptide spans 1–24; that stretch reads MKKIFQLSFTVFIIFISLVLGVVG. 4 cysteine pairs are disulfide-bonded: C34-C82, C46-C66, C51-C79, and C55-C81.

This sequence belongs to the DEFL family. Expressed in flower buds, but not in stems, roots or rosette leaves.

The protein localises to the secreted. This Arabidopsis thaliana (Mouse-ear cress) protein is Defensin-like protein 147 (LCR1).